Reading from the N-terminus, the 279-residue chain is MHPDAQLKTALKNGFDPKLLYKEPLTTVKEPVCSILEKHSKVPVDKVVSHVNEVRDRAFAVFPYACIGQFSFVELSIADSPCYREMLERTKQGHKLLDLGCAFGQELRQLIYDGTPPTNLYGSDIQQDFLSLGYELFLDRAILPDSQLIAADVLDKQSALFQRLAGELNIVYISLFLHVFDFEKQITVAQNVLDLLKAEPGSMIVCRVTACRDQEVLAATQERMPYYYHDLASWNRLWEEVQKQTGVKLSVESWEQPDELVKKHPLPGIYILGSSIRRL.

Residues 124–125 and 152–153 contribute to the S-adenosyl-L-methionine site; these read DI and DV.

Belongs to the class I-like SAM-binding methyltransferase superfamily.

Its pathway is secondary metabolite biosynthesis; terpenoid biosynthesis. In terms of biological role, methyltransferase; part of the gene cluster that mediates the biosynthesis of paraherquonin, a meroterpenoid with a unique, highly congested hexacyclic molecular architecture. The first step of the pathway is the synthesis of 3,5-dimethylorsellinic acid (DMOA) by the polyketide synthase prhL. Synthesis of DMOA is followed by farnesylation by the prenyltransferase prhE, methylesterification by the methyl-transferase prhM, epoxidation of the prenyl chain by the flavin-dependent monooxygenase prhF, and cyclization of the farnesyl moiety by the terpene cyclase prhH, to yield the tetracyclic intermediate, protoaustinoid A. The short chain dehydrogenase prhI then oxidizes the C-3 alcohol group of the terpene cyclase product to transform protoaustinoid A into protoaustinoid B. The FAD-binding monooxygenase prhJ catalyzes the oxidation of protoaustinoid B into preaustinoid A which is further oxidized into preaustinoid A1 by FAD-binding monooxygenase phrK. Finally, prhA leads to berkeleydione via the berkeleyone B intermediate. PrhA is a multifunctional dioxygenase that first desaturates at C5-C6 to form berkeleyone B, followed by rearrangement of the A/B-ring to form the cycloheptadiene moiety in berkeleydione. Berkeleydione serves as the key intermediate for the biosynthesis of paraherquonin as well as many other meroterpenoids. The cytochrome P450 monooxygenases prhB, prhD, and prhN, as well as the isomerase prhC, are probably involved in the late stage of paraherquonin biosynthesis, after the production of berkeleydione. Especially prhC might be a multifunctional enzyme that catalyzes the D-ring expansion via intramolecular methoxy rearrangement, as well as the hydrolysis of the expanded D-ring. This is Methyltransferase prhM from Penicillium brasilianum.